The primary structure comprises 137 residues: Protein PsiE homolog (137 aa).

4 consecutive transmembrane segments (helical) span residues 15-35 (LRIT…AFLI), 55-75 (YYMT…ALIV), 82-102 (FHFP…RFII), and 108-128 (ATST…LFLA).

It belongs to the PsiE family.

It is found in the cell membrane. The sequence is that of Protein PsiE homolog from Listeria innocua serovar 6a (strain ATCC BAA-680 / CLIP 11262).